The primary structure comprises 507 residues: Maturase K (507 aa).

Belongs to the intron maturase 2 family. MatK subfamily.

Its subcellular location is the plastid. The protein resides in the chloroplast. Usually encoded in the trnK tRNA gene intron. Probably assists in splicing its own and other chloroplast group II introns. The sequence is that of Maturase K from Fagopyrum esculentum (Common buckwheat).